Reading from the N-terminus, the 1091-residue chain is Voltage-dependent calcium channel subunit alpha-2/delta-3 (1091 aa).

Positions 1–28 are cleaved as a signal peptide; the sequence is MAGPGSPRRASRGASALLAAALLYAALG. Over 29–1068 the chain is Extracellular; sequence DVVRSEQQIP…HPEENARECG (1040 aa). An N-linked (GlcNAc...) asparagine glycan is attached at N166. A VWFA domain is found at 256-438; the sequence is DVVILVDVSG…ENVMEYLHVL (183 aa). Residues D262, S264, and S266 each contribute to the a divalent metal cation site. Residues 262-266 carry the MIDAS-like motif motif; that stretch reads DVSGS. An N-linked (GlcNAc...) asparagine glycan is attached at N309. C412 and C1055 are joined by a disulfide. The Cache domain occupies 452–549; sequence WTEAYIDSTL…RLLYEEGKKR (98 aa). Residues N553, N632, and N793 are each glycosylated (N-linked (GlcNAc...) asparagine). Y924 carries the phosphotyrosine modification. Residues 1069–1089 traverse the membrane as a helical segment; it reads GAPSLQAQTVLLLLPLLLMLF. Over 1090–1091 the chain is Cytoplasmic; it reads SR.

This sequence belongs to the calcium channel subunit alpha-2/delta family. Dimer formed of alpha-2-2 and delta-2 chains; disulfide-linked. Voltage-dependent calcium channels are multisubunit complexes, consisting of alpha-1 (CACNA1), alpha-2 (CACNA2D), beta (CACNB) and delta (CACNA2D) subunits in a 1:1:1:1 ratio. In terms of processing, N-glycosylated. Post-translationally, may be proteolytically processed into subunits alpha-2-3 and delta-3 that are disulfide-linked. It is however unclear whether such cleavage really takes place in vivo and has a functional role. Only detected in brain. Not present in lung, testis, aorta, spleen, jejunum, ventricular muscle and kidney (at protein level). According to PubMed:11687876, it is brain-specific, while according to PubMed:11245980, it is widely expressed.

The protein localises to the membrane. Functionally, the alpha-2/delta subunit of voltage-dependent calcium channels regulates calcium current density and activation/inactivation kinetics of the calcium channel. Acts as a regulatory subunit for P/Q-type calcium channel (CACNA1A), N-type (CACNA1B), L-type (CACNA1C OR CACNA1D) but not T-type (CACNA1G). This is Voltage-dependent calcium channel subunit alpha-2/delta-3 (CACNA2D3) from Homo sapiens (Human).